Here is a 421-residue protein sequence, read N- to C-terminus: MILIKNGRVIDPKSQRDENIDLIIKENKIYKIGKFDESDEYEKIIDASGNVVAPGLVDVHVHFRDPGFTYKEDIESGAKSAARGGFTTVICMANTNPIVDNEDTFNYVKEKSKNACINVLQAAAITKGFEGKELVDMEALKKAGVPGFTDDGLPLMDSNLIMEAMIKAKELDVPLSFHEEDPSLVGNPGVNAGKVASELGLKGASSVAEDVMVARDCMLALKTGAKVDIQHISSGVSVDMVRFAKYLGATVVAEASPHHFTLTEEDVLEFGTNAKMNPPLRSKWDRDKIIEGLNDGTIEIIATDHAPHSKEEKDREFIKAPSGIIGLETSLALGITNLVHKNHLSMMQLIEKMSINPAKLYNLNIGFIEEGAVADIVIFNPEEEWTVESFVSKADNSPFKGKSLYGKVNYTICNGEIVYNA.

The Zn(2+) site is built by histidine 60 and histidine 62. Substrate contacts are provided by residues 62 to 64 (HFR) and asparagine 94. Zn(2+) contacts are provided by aspartate 151, histidine 178, and histidine 231. Asparagine 277 serves as a coordination point for substrate. Residue aspartate 304 participates in Zn(2+) binding. The active site involves aspartate 304. Histidine 308 lines the substrate pocket.

Belongs to the metallo-dependent hydrolases superfamily. DHOase family. Class I DHOase subfamily. It depends on Zn(2+) as a cofactor.

The catalysed reaction is (S)-dihydroorotate + H2O = N-carbamoyl-L-aspartate + H(+). It participates in pyrimidine metabolism; UMP biosynthesis via de novo pathway; (S)-dihydroorotate from bicarbonate: step 3/3. Functionally, catalyzes the reversible cyclization of carbamoyl aspartate to dihydroorotate. The sequence is that of Dihydroorotase from Clostridioides difficile (strain 630) (Peptoclostridium difficile).